Here is a 130-residue protein sequence, read N- to C-terminus: Small ribosomal subunit protein uS11 (130 aa).

Belongs to the universal ribosomal protein uS11 family. Part of the 30S ribosomal subunit. Interacts with proteins S7 and S18. Binds to IF-3.

Located on the platform of the 30S subunit, it bridges several disparate RNA helices of the 16S rRNA. Forms part of the Shine-Dalgarno cleft in the 70S ribosome. The chain is Small ribosomal subunit protein uS11 from Syntrophomonas wolfei subsp. wolfei (strain DSM 2245B / Goettingen).